Reading from the N-terminus, the 153-residue chain is Putative trans-acting regulator pXO2-62/BXB0076/GBAA_pXO2_0076 (153 aa).

Belongs to the AtxA/AcpA family.

This chain is Putative trans-acting regulator pXO2-62/BXB0076/GBAA_pXO2_0076, found in Bacillus anthracis.